The sequence spans 347 residues: Methylthioribose-1-phosphate isomerase (347 aa).

Substrate contacts are provided by residues 45–47 (RGA), arginine 88, and glutamine 197. Aspartate 238 acts as the Proton donor in catalysis. 248–249 (NK) is a substrate binding site.

This sequence belongs to the eIF-2B alpha/beta/delta subunits family. MtnA subfamily.

It catalyses the reaction 5-(methylsulfanyl)-alpha-D-ribose 1-phosphate = 5-(methylsulfanyl)-D-ribulose 1-phosphate. Its pathway is amino-acid biosynthesis; L-methionine biosynthesis via salvage pathway; L-methionine from S-methyl-5-thio-alpha-D-ribose 1-phosphate: step 1/6. In terms of biological role, catalyzes the interconversion of methylthioribose-1-phosphate (MTR-1-P) into methylthioribulose-1-phosphate (MTRu-1-P). The chain is Methylthioribose-1-phosphate isomerase from Nostoc sp. (strain PCC 7120 / SAG 25.82 / UTEX 2576).